We begin with the raw amino-acid sequence, 426 residues long: GATA type zinc finger protein asd-4 (426 aa).

Residues 16–40 form a GATA-type zinc finger; the sequence is CQNCATSTTPLWRRDEMGQVLCNAC. 2 disordered regions span residues 70 to 143 and 159 to 178; these read RPDL…NPHI and PGFG…MNGE. Low complexity predominate over residues 104-113; it reads PNNPAAAARR. The segment covering 128-138 has biased composition (polar residues); the sequence is SPVSRTGTPNV. Positions 182-292 form a coiled coil; sequence QTHEQLLAAN…QDNGRHKKIR (111 aa). Positions 306 to 318 are enriched in low complexity; sequence VEPQQPEQQQPAP. The disordered stretch occupies residues 306–426; that stretch reads VEPQQPEQQQ…PVEEAPKAES (121 aa). Residues 335-353 show a composition bias toward pro residues; it reads APAPAPEAAPEQAPAPAPE. Over residues 354–419 the composition is skewed to low complexity; sequence PVQEQAQEPE…SEPPTTAPVE (66 aa).

In terms of assembly, homotetramer.

Its subcellular location is the nucleus. Transcriptional regulator that functions in sexual development; disruption of asd-4 gene results in agenesis of ascus and ascospore with macroscopically normal fruiting body formation. The GATA-type zinc finger domain binds to DNA sequences from its own promoter region. The polypeptide is GATA type zinc finger protein asd-4 (asd-4) (Neurospora crassa (strain ATCC 24698 / 74-OR23-1A / CBS 708.71 / DSM 1257 / FGSC 987)).